A 187-amino-acid chain; its full sequence is Flavin prenyltransferase UbiX (187 aa).

FMN contacts are provided by residues 9–11, T34, 88–91, and R123; these read GSS and SISS. Residues Y153 and K169 each coordinate dimethylallyl phosphate.

This sequence belongs to the UbiX/PAD1 family.

The enzyme catalyses dimethylallyl phosphate + FMNH2 = prenylated FMNH2 + phosphate. In terms of biological role, flavin prenyltransferase that catalyzes the synthesis of the prenylated FMN cofactor (prenyl-FMN) for 4-hydroxy-3-polyprenylbenzoic acid decarboxylase UbiD. The prenyltransferase is metal-independent and links a dimethylallyl moiety from dimethylallyl monophosphate (DMAP) to the flavin N5 and C6 atoms of FMN. This Campylobacter jejuni subsp. jejuni serotype O:2 (strain ATCC 700819 / NCTC 11168) protein is Flavin prenyltransferase UbiX.